A 291-amino-acid chain; its full sequence is MTTLAIDIGGTKLAAALIGADGQIRDRRELPTPASQTPEALRDALSALVSPLQAHAQRVAIASTGIIRDGSLLALNPHNLGGLLHFPLVKTLEQLTNLPSIAINDAQAAAWAEYQALEGDITDMVFITVSTGVGGGVVSGGKLLTGPGGLAGHIGHTLADPHGPVCGCGRTGCVEAIASGRGIAAAAQGELAGADARTIFTRAGQGDEQAQQLIHRSARTLARLIADIKATTDCQCVVVGGSVGLAEGYLALVEMYLAQEPAAFHVDLLAAHYRHDAGLLGAALLAQGEKL.

ATP is bound by residues 5 to 12 (AIDIGGTK) and 132 to 139 (GVGGGVVS). Zn(2+) contacts are provided by histidine 156, cysteine 166, cysteine 168, and cysteine 173.

Belongs to the ROK (NagC/XylR) family. NanK subfamily. As to quaternary structure, homodimer.

It catalyses the reaction an N-acyl-D-mannosamine + ATP = an N-acyl-D-mannosamine 6-phosphate + ADP + H(+). It participates in amino-sugar metabolism; N-acetylneuraminate degradation; D-fructose 6-phosphate from N-acetylneuraminate: step 2/5. Its function is as follows. Catalyzes the phosphorylation of N-acetylmannosamine (ManNAc) to ManNAc-6-P. This Escherichia coli O9:H4 (strain HS) protein is N-acetylmannosamine kinase.